A 319-amino-acid polypeptide reads, in one-letter code: tRNA (guanine(9)-N(1))-methyltransferase Trmt10A (319 aa).

2 disordered regions span residues 16-87 (LSLN…KRQL) and 275-319 (AKIT…SLDS). A compositionally biased stretch (polar residues) spans 17–33 (SLNNCPGTTPGTPMSKN). The short motif at 35–42 (LKKQRKLA) is the Nuclear localization signal element. Composition is skewed to basic and acidic residues over residues 40 to 58 (KLAE…EREK), 78 to 87 (SRKELKKRQL), and 276 to 302 (KITD…ESDK). Positions 44–67 (FAELRKLRREREREKKKQKRREAK) form a coiled coil. Positions 83–274 (KKRQLADGGK…ETIPMRKGAK (192 aa)) constitute an SAM-dependent MTase TRM10-type domain.

It belongs to the class IV-like SAM-binding methyltransferase superfamily. TRM10 family.

It localises to the nucleus. It is found in the nucleolus. The protein localises to the chromosome. It carries out the reaction guanosine(9) in tRNA + S-adenosyl-L-methionine = N(1)-methylguanosine(9) in tRNA + S-adenosyl-L-homocysteine + H(+). Functionally, S-adenosyl-L-methionine-dependent guanine N(1)-methyltransferase that catalyzes the formation of N(1)-methylguanine at position 9 (m1G9) in tRNAs. Modulates Mettl3-mediated N6-methyladenosine (m6A) methylation of mRNA 5'-UTRs and 3'-UTRs independent of its methyltransferase activity; influences mRNA stability and protein levels, in particular of Hsp70 chaperone proteins and other stress response proteins. Also regulates stability of transcripts encoding proteins involved in signaling processes and proteins involved in neurogenesis and axon guidance pathways. The sequence is that of tRNA (guanine(9)-N(1))-methyltransferase Trmt10A from Drosophila melanogaster (Fruit fly).